The chain runs to 55 residues: Large ribosomal subunit protein bL33 (55 aa).

The protein belongs to the bacterial ribosomal protein bL33 family.

This chain is Large ribosomal subunit protein bL33, found in Yersinia pestis (strain Pestoides F).